Consider the following 195-residue polypeptide: Dephospho-CoA kinase (195 aa).

The region spanning 3–195 (IIGLTGSIAM…FSIIENLLKN (193 aa)) is the DPCK domain. An ATP-binding site is contributed by 11–16 (AMGKST).

This sequence belongs to the CoaE family.

The protein resides in the cytoplasm. It catalyses the reaction 3'-dephospho-CoA + ATP = ADP + CoA + H(+). It participates in cofactor biosynthesis; coenzyme A biosynthesis; CoA from (R)-pantothenate: step 5/5. Its function is as follows. Catalyzes the phosphorylation of the 3'-hydroxyl group of dephosphocoenzyme A to form coenzyme A. The polypeptide is Dephospho-CoA kinase (Bartonella quintana (strain Toulouse) (Rochalimaea quintana)).